We begin with the raw amino-acid sequence, 291 residues long: ATP synthase gamma chain (291 aa).

This sequence belongs to the ATPase gamma chain family. F-type ATPases have 2 components, CF(1) - the catalytic core - and CF(0) - the membrane proton channel. CF(1) has five subunits: alpha(3), beta(3), gamma(1), delta(1), epsilon(1). CF(0) has three main subunits: a, b and c.

It localises to the cell membrane. Functionally, produces ATP from ADP in the presence of a proton gradient across the membrane. The gamma chain is believed to be important in regulating ATPase activity and the flow of protons through the CF(0) complex. The chain is ATP synthase gamma chain from Streptococcus equi subsp. equi (strain 4047).